A 955-amino-acid polypeptide reads, in one-letter code: MTRKNTTTNPWAKFHGPNLGYVIEQYDLYVTGAGSVDPELQELFEIFGAPSFQDDVVTGDNTATHFSPQNTGNIEKILKVVQLVEQIRSFGHTLAHINPMEDAANGQSLLEKAMSELSDADLKAIPAKTVWQDAPEGIHTALDVIHRLKDVYTKSLAYEFSHIQDSEERAWLHQMVESNSLRQPLSNKKRTALLKRLTAVEGFEQFLHKTFVGQKRFSIEGVDMLVPVLDEIVLEGAKNGVEDVMIGMAHRGRLSVLAHVLEKPYSHMFAEFKHAKIEGAVANSGWTGDVKYHLGREQVVSNEEVSTRVTLANNPSHLEFVNPVVEGFARAAQENRKKSGLPDQDTSKSFVILVHGDAAFPGQGIVSETLNLSRLNAYQTGGTIHVIANNAVGFTTDSYDSRSTKYSSDLAKGFDIPIVHVNADDPEACLAAANLAIQYRMLFKKDFLIDLIGYRRYGHNEMDDPAVTQPQVYKKIKNHPTVRAIYADQLQAAGVLNADEVETITQFTQEQLKSDYAQVPPADTSDATIHVKVPDVVAKGIQPIDTGVEIDSLRAINEGLLSWPEGFNVYPKVKKILERRKDALEENGKIEWALAESLAFASILQEGTPIRLTGQDSQRGTFAHRHIVLHDTDTNETYSPLHRLPNINASFSVHNSPLSEAAVVGYEYGYNVFAPETLVMWEAQYGDFSNTAQALFDQYVSAGRAKWGQKSGLVLLLPHGYEGQGPEHSSARPERFLQLAAENNWTVANLTSAAQYFHILRRQASILGTEAVRPLVLMTPKSLLRHPLTLSTASQLSEGRFQPALEQENLGMKPNKVKRLVLSTGKMAIDLAAEIESGKHEYNLDEVHVVRIEQLYPFPAEKVQSIIKRFKNLEEIIWVQEEPRNMGAWHYMAPILFELAGDKVKTGYIGRPDRSSPSGGDPFAHKAEQELIVAHALDVKYNFRQDKQEIEVYSN.

Belongs to the alpha-ketoglutarate dehydrogenase family. Homodimer. Part of the 2-oxoglutarate dehydrogenase (OGDH) complex composed of E1 (2-oxoglutarate dehydrogenase), E2 (dihydrolipoamide succinyltransferase) and E3 (dihydrolipoamide dehydrogenase); the complex contains multiple copies of the three enzymatic components (E1, E2 and E3). Requires thiamine diphosphate as cofactor.

The catalysed reaction is N(6)-[(R)-lipoyl]-L-lysyl-[protein] + 2-oxoglutarate + H(+) = N(6)-[(R)-S(8)-succinyldihydrolipoyl]-L-lysyl-[protein] + CO2. E1 component of the 2-oxoglutarate dehydrogenase (OGDH) complex which catalyzes the decarboxylation of 2-oxoglutarate, the first step in the conversion of 2-oxoglutarate to succinyl-CoA and CO(2). The polypeptide is 2-oxoglutarate dehydrogenase E1 component (Bacillus cereus (strain ATCC 14579 / DSM 31 / CCUG 7414 / JCM 2152 / NBRC 15305 / NCIMB 9373 / NCTC 2599 / NRRL B-3711)).